The sequence spans 182 residues: ADP-ribosylation factor-like protein 3 (182 aa).

Residue Gly2 is the site of N-myristoyl glycine attachment. Residues 24–31 (GLDNGGKT), 67–71 (DIGGQ), and 126–129 (NKQD) each bind GTP.

It belongs to the small GTPase superfamily. Arf family.

Its subcellular location is the golgi apparatus membrane. The protein localises to the cytoplasm. It localises to the cytoskeleton. It is found in the spindle. The protein resides in the nucleus. Its subcellular location is the microtubule organizing center. The protein localises to the centrosome. It localises to the cell projection. It is found in the cilium. Its function is as follows. Small GTP-binding protein which cycles between an inactive GDP-bound and an active GTP-bound form, and the rate of cycling is regulated by guanine nucleotide exchange factors (GEF) and GTPase-activating proteins (GAP). Required for normal cytokinesis and cilia signaling. Required for targeting proteins to the ciliary membrane by releasing myristoylated protein from unc119 cargo adapters into the cilium. This Danio rerio (Zebrafish) protein is ADP-ribosylation factor-like protein 3 (arl3).